A 187-amino-acid chain; its full sequence is Putative type I specificity subunit S.MpnORF289P N-terminus (187 aa).

The protein belongs to the type-I restriction system S methylase family. The methyltransferase is composed of M and S polypeptides.

Functionally, the N-terminal section of a specificity (S) subunit of a type I methyltransferase (MTase); this subunit dictates DNA sequence specificity. The single R subunit has multiple frameshifts and is probably not expressed. In Mycoplasma pneumoniae (strain ATCC 29342 / M129 / Subtype 1) (Mycoplasmoides pneumoniae), this protein is Putative type I specificity subunit S.MpnORF289P N-terminus.